Reading from the N-terminus, the 511-residue chain is MFS-type transporper mpsC (511 aa).

Positions 1–35 (MTSSTESKHSNDESTDLEKQDAEESHGLPEERKQD) are enriched in basic and acidic residues. A disordered region spans residues 1–65 (MTSSTESKHS…PDDPANPMNW (65 aa)). 7 helical membrane-spanning segments follow: residues 74–94 (VVMA…FAPA), 108–128 (ITAA…PLVI), 147–167 (ITVA…FLVF), 169–189 (LITG…IADV), 201–221 (AFAM…GFIA), 228–248 (WVFR…YFVM), and 303–323 (PITL…ILLF). A glycan (N-linked (GlcNAc...) asparagine) is linked at N337. Transmembrane regions (helical) follow at residues 342 to 362 (GLSY…FGML), 383 to 403 (LLLM…YGWT), 411 to 431 (ILPM…MMPI), 443 to 465 (VAAS…LPLA), and 476 to 496 (GWGN…PILF).

It belongs to the major facilitator superfamily.

The protein resides in the membrane. In terms of biological role, MFS-type transporper; part of the gene cluster that mediates the biosynthesis of macrophasetins, 3-decalinoyltetramic acids (DTAs) which feature a tetramate (pyrrolidine-2,4-dione) unit connected to a decalin fragment and that have potent bioactivities. Efflux pump that might be required for efficient secretion of macrophasetins. In Macrophomina phaseolina (strain MS6) (Charcoal rot fungus), this protein is MFS-type transporper mpsC.